The chain runs to 90 residues: Probable Fe(2+)-trafficking protein (90 aa).

Belongs to the Fe(2+)-trafficking protein family.

Functionally, could be a mediator in iron transactions between iron acquisition and iron-requiring processes, such as synthesis and/or repair of Fe-S clusters in biosynthetic enzymes. The polypeptide is Probable Fe(2+)-trafficking protein (Haemophilus influenzae (strain 86-028NP)).